The primary structure comprises 1488 residues: Calmodulin binding protein PICBP (1488 aa).

4 disordered regions span residues 1-31 (MSNPMFPEKWEESSTSKSSRRVHKRRERKMW), 63-112 (TAES…SRIS), 280-329 (GPLG…GRSS), and 378-414 (HDHDDGKVDGTTSDGTVGDNEEVCREGSSGELREEDG). A compositionally biased stretch (basic residues) spans 18-31 (SSRRVHKRRERKMW). The span at 76-86 (DDSRTYSKSSD) shows a compositional bias: basic and acidic residues. Basic residues predominate over residues 98–107 (SVKRRAKSKS). The segment covering 297–312 (DNVDGDSDEEVFEEEV) has biased composition (acidic residues). Calmodulin-binding regions lie at residues 493-592 (TFHM…SLIP) and 831-938 (NSLK…DIVL). Disordered stretches follow at residues 816-844 (IPDSSSDEESVSESSNSLKEEKEHQGETK) and 941-971 (HDTPKQTKNSDTPRNNDETKEGKPRVEEGCE). Basic and acidic residues-rich tracts occupy residues 833 to 844 (LKEEKEHQGETK) and 954 to 971 (RNNDETKEGKPRVEEGCE). The interval 1135–1229 (EKRVKGWNNV…SLLAQAFDTI (95 aa)) is calmodulin-binding. 2 disordered regions span residues 1232-1252 (QDMGSGSTPGSAASSRNISRQ) and 1316-1340 (EKNQTLPEETRKEEEEEELKEDTSV). Positions 1235-1252 (GSGSTPGSAASSRNISRQ) are enriched in low complexity. Positions 1316–1328 (EKNQTLPEETRKE) are enriched in basic and acidic residues. Residues 1379 to 1483 (RQKSETLQVS…QLLVQAFESL (105 aa)) are calmodulin-binding.

Functionally, binds calmodulin in a calcium-dependent manner in vitro. May play a role in general plant defense including R gene-mediated responses. The polypeptide is Calmodulin binding protein PICBP (Arabidopsis thaliana (Mouse-ear cress)).